The following is a 265-amino-acid chain: Hydroxyethylthiazole kinase 2 (265 aa).

Met39 is a binding site for substrate. Residues Lys115 and Thr168 each contribute to the ATP site. Gly195 serves as a coordination point for substrate.

The protein belongs to the Thz kinase family. Mg(2+) is required as a cofactor.

The catalysed reaction is 5-(2-hydroxyethyl)-4-methylthiazole + ATP = 4-methyl-5-(2-phosphooxyethyl)-thiazole + ADP + H(+). It functions in the pathway cofactor biosynthesis; thiamine diphosphate biosynthesis; 4-methyl-5-(2-phosphoethyl)-thiazole from 5-(2-hydroxyethyl)-4-methylthiazole: step 1/1. In terms of biological role, catalyzes the phosphorylation of the hydroxyl group of 4-methyl-5-beta-hydroxyethylthiazole (THZ). The polypeptide is Hydroxyethylthiazole kinase 2 (Clostridium botulinum (strain 657 / Type Ba4)).